The sequence spans 939 residues: Valine--tRNA ligase (939 aa).

Positions 47 to 57 (PNVTGILHMGH) match the 'HIGH' region motif. The 'KMSKS' region signature appears at 563–567 (KLSKS). An ATP-binding site is contributed by Lys566. A coiled-coil region spans residues 874–939 (EHLAKERVRL…QSILDKLASL (66 aa)).

The protein belongs to the class-I aminoacyl-tRNA synthetase family. ValS type 1 subfamily. As to quaternary structure, monomer.

The protein resides in the cytoplasm. It catalyses the reaction tRNA(Val) + L-valine + ATP = L-valyl-tRNA(Val) + AMP + diphosphate. Its function is as follows. Catalyzes the attachment of valine to tRNA(Val). As ValRS can inadvertently accommodate and process structurally similar amino acids such as threonine, to avoid such errors, it has a 'posttransfer' editing activity that hydrolyzes mischarged Thr-tRNA(Val) in a tRNA-dependent manner. The chain is Valine--tRNA ligase from Chlamydia trachomatis serovar A (strain ATCC VR-571B / DSM 19440 / HAR-13).